Reading from the N-terminus, the 617-residue chain is Chaperone protein HscA homolog (617 aa).

The protein belongs to the heat shock protein 70 family.

Probable chaperone. Has a low intrinsic ATPase activity which is markedly stimulated by HscB. The polypeptide is Chaperone protein HscA homolog (Vibrio vulnificus (strain CMCP6)).